We begin with the raw amino-acid sequence, 106 residues long: Large ribosomal subunit protein bL21 (106 aa).

The protein belongs to the bacterial ribosomal protein bL21 family. In terms of assembly, part of the 50S ribosomal subunit. Contacts protein L20.

This protein binds to 23S rRNA in the presence of protein L20. This chain is Large ribosomal subunit protein bL21, found in Xanthomonas euvesicatoria pv. vesicatoria (strain 85-10) (Xanthomonas campestris pv. vesicatoria).